The primary structure comprises 278 residues: Large ribosomal subunit protein uL2 (278 aa).

Disordered regions lie at residues M1–H58 and V225–R278. A compositionally biased stretch (basic residues) spans L37 to H58. Positions P253–I267 are enriched in basic and acidic residues. Over residues V268–R278 the composition is skewed to basic residues.

The protein belongs to the universal ribosomal protein uL2 family. As to quaternary structure, part of the 50S ribosomal subunit. Forms a bridge to the 30S subunit in the 70S ribosome.

Functionally, one of the primary rRNA binding proteins. Required for association of the 30S and 50S subunits to form the 70S ribosome, for tRNA binding and peptide bond formation. It has been suggested to have peptidyltransferase activity; this is somewhat controversial. Makes several contacts with the 16S rRNA in the 70S ribosome. This Rhodococcus erythropolis (strain PR4 / NBRC 100887) protein is Large ribosomal subunit protein uL2.